Here is a 521-residue protein sequence, read N- to C-terminus: GMP synthase [glutamine-hydrolyzing] (521 aa).

One can recognise a Glutamine amidotransferase type-1 domain in the interval 8–203; that stretch reads KILILDFGAQ…VVDVCGCQTL (196 aa). The Nucleophile role is filled by cysteine 85. Residues histidine 177 and glutamate 179 contribute to the active site. The 193-residue stretch at 204–396 folds into the GMPS ATP-PPase domain; sequence WTAANIIDDQ…LGLPRTMVYR (193 aa). Residue 231–237 coordinates ATP; the sequence is SGGVDSS.

In terms of assembly, homodimer.

The enzyme catalyses XMP + L-glutamine + ATP + H2O = GMP + L-glutamate + AMP + diphosphate + 2 H(+). Its pathway is purine metabolism; GMP biosynthesis; GMP from XMP (L-Gln route): step 1/1. Catalyzes the synthesis of GMP from XMP. This chain is GMP synthase [glutamine-hydrolyzing], found in Stenotrophomonas maltophilia (strain R551-3).